A 138-amino-acid polypeptide reads, in one-letter code: uncharacterized protein (138 aa).

The next 2 membrane-spanning stretches (helical) occupy residues 1–21 (MEIG…EAIV) and 46–66 (YAFI…HKFV).

The protein resides in the cell membrane. This is an uncharacterized protein from Methanocaldococcus jannaschii (strain ATCC 43067 / DSM 2661 / JAL-1 / JCM 10045 / NBRC 100440) (Methanococcus jannaschii).